We begin with the raw amino-acid sequence, 337 residues long: Phenylalanine--tRNA ligase alpha subunit (337 aa).

A Mg(2+)-binding site is contributed by Glu-252.

It belongs to the class-II aminoacyl-tRNA synthetase family. Phe-tRNA synthetase alpha subunit type 1 subfamily. In terms of assembly, tetramer of two alpha and two beta subunits. It depends on Mg(2+) as a cofactor.

It localises to the cytoplasm. It carries out the reaction tRNA(Phe) + L-phenylalanine + ATP = L-phenylalanyl-tRNA(Phe) + AMP + diphosphate + H(+). The protein is Phenylalanine--tRNA ligase alpha subunit of Francisella tularensis subsp. mediasiatica (strain FSC147).